We begin with the raw amino-acid sequence, 334 residues long: N-acetyl-gamma-glutamyl-phosphate reductase (334 aa).

The active site involves C154.

This sequence belongs to the NAGSA dehydrogenase family. Type 1 subfamily.

The protein resides in the cytoplasm. It carries out the reaction N-acetyl-L-glutamate 5-semialdehyde + phosphate + NADP(+) = N-acetyl-L-glutamyl 5-phosphate + NADPH + H(+). The protein operates within amino-acid biosynthesis; L-arginine biosynthesis; N(2)-acetyl-L-ornithine from L-glutamate: step 3/4. In terms of biological role, catalyzes the NADPH-dependent reduction of N-acetyl-5-glutamyl phosphate to yield N-acetyl-L-glutamate 5-semialdehyde. This chain is N-acetyl-gamma-glutamyl-phosphate reductase, found in Buchnera aphidicola subsp. Schizaphis graminum (strain Sg).